We begin with the raw amino-acid sequence, 1186 residues long: Syntaxin-binding protein 5-like (1186 aa).

Methionine 1 is modified (N-acetylmethionine). A disordered region spans residues 15-40 (ASSPGSGSSSGSNSGGGAGSGSVHPA). Residues 16 to 26 (SSPGSGSSSGS) are compositionally biased toward low complexity. 10 WD repeats span residues 74 to 107 (TALA…CYCQ), 114 to 153 (VLQL…SLKF), 158 to 194 (ITYC…GYVI), 213 to 247 (HLSD…ELRV), 253 to 285 (IHSI…PSRP), 307 to 349 (PILK…KAIT), 357 to 391 (IVEF…VVDL), 413 to 490 (TCTA…YKLK), 518 to 629 (QMIY…ELVI), and 643 to 705 (TSLA…IADN). A Phosphothreonine modification is found at threonine 568. Phosphoserine is present on residues serine 574, serine 589, and serine 593. A Phosphothreonine modification is found at threonine 596. Serine 599 carries the phosphoserine modification. Arginine 709 is modified (omega-N-methylarginine). Over residues 748–769 (TSDHVNGHCTSPTSQSCSSGKR) the composition is skewed to polar residues. The tract at residues 748 to 771 (TSDHVNGHCTSPTSQSCSSGKRLS) is disordered. Phosphoserine occurs at positions 763, 765, 766, 771, 772, 793, 800, 812, 820, 822, and 823. 4 WD repeats span residues 832–889 (ITAL…SGTF), 898–969 (TFSC…QTCL), 974–1018 (ITET…LDVN), and 1032–1055 (CFTN…TYSQ). Threonine 1093 bears the Phosphothreonine mark. Residues 1121 to 1181 (SIEGMKGAAG…HELMLKYKDK (61 aa)) form the v-SNARE coiled-coil homology domain.

Belongs to the WD repeat L(2)GL family. Interacts with STX1A and STX4. Phosphorylated, leading to STXBP5L increased turnover and subsequent de-repression of insulin secretion. Phosphorylated on serine residues in response to glucose or phorbol esters. In terms of processing, ubiquitinated by the E3 ligase SYVN1, leading to STXBP5L proteasomal degradation. In terms of tissue distribution, detected in kidney, hippocampus and lung carcinoma.

It is found in the cytoplasm. Its subcellular location is the cell membrane. It localises to the membrane. In terms of biological role, plays a role in vesicle trafficking and exocytosis inhibition. In pancreatic beta-cells, inhibits insulin secretion probably by interacting with and regulating STX1A and STX4, key t-SNARE proteins involved in the fusion of insulin granules to the plasma membrane. Also plays a role in neurotransmitter release by inhibiting basal acetylcholine release from axon terminals and by preventing synaptic fatigue upon repetitive stimulation. Promotes as well axonal outgrowth. The protein is Syntaxin-binding protein 5-like (STXBP5L) of Homo sapiens (Human).